A 149-amino-acid chain; its full sequence is Large ribosomal subunit protein bL9 (149 aa).

This sequence belongs to the bacterial ribosomal protein bL9 family.

In terms of biological role, binds to the 23S rRNA. The polypeptide is Large ribosomal subunit protein bL9 (Laribacter hongkongensis (strain HLHK9)).